The chain runs to 447 residues: Methyl-coenzyme M reductase I subunit beta (447 aa).

Coenzyme M is bound at residue tyrosine 371. Glycine 373 provides a ligand contact to coenzyme B.

The protein belongs to the methyl-coenzyme M reductase beta subunit family. In terms of assembly, MCR is a hexamer of two alpha, two beta, and two gamma chains, forming a dimer of heterotrimers. Requires coenzyme F430 as cofactor.

The protein resides in the cytoplasm. The catalysed reaction is coenzyme B + methyl-coenzyme M = methane + coenzyme M-coenzyme B heterodisulfide. It participates in one-carbon metabolism; methyl-coenzyme M reduction; methane from methyl-coenzyme M: step 1/1. Functionally, component of the methyl-coenzyme M reductase (MCR) I that catalyzes the reductive cleavage of methyl-coenzyme M (CoM-S-CH3 or 2-(methylthio)ethanesulfonate) using coenzyme B (CoB or 7-mercaptoheptanoylthreonine phosphate) as reductant which results in the production of methane and the mixed heterodisulfide of CoB and CoM (CoM-S-S-CoB). This is the final step in methanogenesis. This chain is Methyl-coenzyme M reductase I subunit beta (mcrB), found in Methanocaldococcus jannaschii (strain ATCC 43067 / DSM 2661 / JAL-1 / JCM 10045 / NBRC 100440) (Methanococcus jannaschii).